A 149-amino-acid polypeptide reads, in one-letter code: MNILVLNGINLNMFGKRDPKQYGTITLAQIDEQLDALGAELGATVQHFQSNHEGEMAERIHQAHVDNVDAVLINAGAWTHYSYGIRDALAILKCPIVEVHMSNIHAREPFRHHSVIAEIARGQIAGFGVDSYLMGLRAAVNLVNAAKAG.

Y22 acts as the Proton acceptor in catalysis. The substrate site is built by N74, H80, and D87. H100 functions as the Proton donor in the catalytic mechanism. Substrate is bound by residues 101–102 (MS) and R111.

It belongs to the type-II 3-dehydroquinase family. As to quaternary structure, homododecamer.

It catalyses the reaction 3-dehydroquinate = 3-dehydroshikimate + H2O. Its pathway is metabolic intermediate biosynthesis; chorismate biosynthesis; chorismate from D-erythrose 4-phosphate and phosphoenolpyruvate: step 3/7. Functionally, catalyzes a trans-dehydration via an enolate intermediate. This chain is 3-dehydroquinate dehydratase, found in Leptothrix cholodnii (strain ATCC 51168 / LMG 8142 / SP-6) (Leptothrix discophora (strain SP-6)).